We begin with the raw amino-acid sequence, 241 residues long: Uridylate kinase (241 aa).

An ATP-binding site is contributed by Lys12 to Gly15. The involved in allosteric activation by GTP stretch occupies residues Gly20–Gly25. Gly54 serves as a coordination point for UMP. ATP contacts are provided by Gly55 and Arg59. Residues Asp74 and Thr135–Thr142 contribute to the UMP site. Residues Asn163, Tyr169, and Asp172 each coordinate ATP.

Belongs to the UMP kinase family. Homohexamer.

It localises to the cytoplasm. It catalyses the reaction UMP + ATP = UDP + ADP. It participates in pyrimidine metabolism; CTP biosynthesis via de novo pathway; UDP from UMP (UMPK route): step 1/1. With respect to regulation, allosterically activated by GTP. Inhibited by UTP. Functionally, catalyzes the reversible phosphorylation of UMP to UDP. The chain is Uridylate kinase from Lactobacillus acidophilus (strain ATCC 700396 / NCK56 / N2 / NCFM).